The following is a 465-amino-acid chain: GTPase Der (465 aa).

EngA-type G domains lie at P3 to S167 and I179 to L352. GTP-binding positions include G9–S16, D57–M61, N119–D122, G185–S192, D232–L236, and N297–D300. Residues R353–D437 form the KH-like domain.

It belongs to the TRAFAC class TrmE-Era-EngA-EngB-Septin-like GTPase superfamily. EngA (Der) GTPase family. In terms of assembly, associates with the 50S ribosomal subunit.

Its function is as follows. GTPase that plays an essential role in the late steps of ribosome biogenesis. This chain is GTPase Der, found in Xylella fastidiosa (strain M12).